A 100-amino-acid chain; its full sequence is RNA-binding protein YlxQ (100 aa).

Belongs to the eukaryotic ribosomal protein eL8 family.

In terms of biological role, RNA-binding protein that recognizes the K-turn motif present in ribosomal RNA, but also in box C/D and box C'/D' sRNAs. The protein is RNA-binding protein YlxQ of Bacillus subtilis (strain 168).